A 195-amino-acid polypeptide reads, in one-letter code: Thymidylate kinase (195 aa).

7 to 14 (GIDGVGKS) is an ATP binding site.

It belongs to the thymidylate kinase family.

It catalyses the reaction dTMP + ATP = dTDP + ADP. Functionally, phosphorylation of dTMP to form dTDP in both de novo and salvage pathways of dTTP synthesis. This chain is Thymidylate kinase, found in Campylobacter concisus (strain 13826).